A 425-amino-acid chain; its full sequence is Histidine--tRNA ligase (425 aa).

Belongs to the class-II aminoacyl-tRNA synthetase family. As to quaternary structure, homodimer.

Its subcellular location is the cytoplasm. The enzyme catalyses tRNA(His) + L-histidine + ATP = L-histidyl-tRNA(His) + AMP + diphosphate + H(+). In Listeria innocua serovar 6a (strain ATCC BAA-680 / CLIP 11262), this protein is Histidine--tRNA ligase.